Consider the following 701-residue polypeptide: Sulfate anion transporter 1 (701 aa).

Residues 1-20 form a disordered region; that stretch reads MDESPEPLQQGRGPVPVRRQ. Helical transmembrane passes span 68–90 and 94–116; these read YLAG…AIAY and AGLQ…FLMG. N-linked (GlcNAc...) asparagine glycosylation is found at asparagine 158 and asparagine 163. The next 7 helical transmembrane spans lie at 176–198, 255–277, 290–309, 342–364, 377–399, 412–434, and 472–494; these read YAIR…MGVL, GAGQ…LLAA, VPLP…SHFG, ALDA…EMFA, LLAV…SAAL, TQLS…APLF, and LVWA…LAGV. In terms of domain architecture, STAS spans 527–687; that stretch reads EFEGLVPEPG…LSVHDAVQTA (161 aa).

It belongs to the SLC26A/SulP transporter (TC 2.A.53) family. Expressed most abundantly in the kidney and liver, with lower levels in the pancreas, testis, brain, small intestine, colon, and lung.

It localises to the cell membrane. It is found in the basolateral cell membrane. The enzyme catalyses thiosulfate(in) + sulfate(out) = thiosulfate(out) + sulfate(in). The catalysed reaction is 2 hydrogencarbonate(out) + sulfate(in) = 2 hydrogencarbonate(in) + sulfate(out). It catalyses the reaction oxalate(in) + sulfate(out) = oxalate(out) + sulfate(in). It carries out the reaction oxalate(in) + 2 hydrogencarbonate(out) = oxalate(out) + 2 hydrogencarbonate(in). Sodium-independent sulfate anion transporter. Can transport other anions including bicarbonate, thiosulfate and oxalate by mediating sulfate-thiosulfate, sulfate-hydrogencarbonate and sulfate-oxalate anion exchange. Mediates oxalate-hydrogencarbonate anion exchange. This is Sulfate anion transporter 1 (SLC26A1) from Homo sapiens (Human).